The primary structure comprises 140 residues: Nucleoside diphosphate kinase (140 aa).

Residues Lys11, Phe59, Arg87, Thr93, Arg104, and Asn114 each contribute to the ATP site. The Pros-phosphohistidine intermediate role is filled by His117.

The protein belongs to the NDK family. Homotetramer. Requires Mg(2+) as cofactor.

The protein resides in the cytoplasm. The catalysed reaction is a 2'-deoxyribonucleoside 5'-diphosphate + ATP = a 2'-deoxyribonucleoside 5'-triphosphate + ADP. The enzyme catalyses a ribonucleoside 5'-diphosphate + ATP = a ribonucleoside 5'-triphosphate + ADP. In terms of biological role, major role in the synthesis of nucleoside triphosphates other than ATP. The ATP gamma phosphate is transferred to the NDP beta phosphate via a ping-pong mechanism, using a phosphorylated active-site intermediate. The sequence is that of Nucleoside diphosphate kinase from Methylorubrum populi (strain ATCC BAA-705 / NCIMB 13946 / BJ001) (Methylobacterium populi).